The following is a 202-amino-acid chain: Small ribosomal subunit protein uS4c-1 (202 aa).

One can recognise an S4 RNA-binding domain in the interval 90–152 (MRLDNIVLRA…NKSRQLIDLN (63 aa)).

It belongs to the universal ribosomal protein uS4 family. Part of the 30S ribosomal subunit. Contacts protein S5. The interaction surface between S4 and S5 is involved in control of translational fidelity.

It localises to the plastid. Its subcellular location is the chloroplast. Its function is as follows. One of the primary rRNA binding proteins, it binds directly to 16S rRNA where it nucleates assembly of the body of the 30S subunit. With S5 and S12 plays an important role in translational accuracy. The protein is Small ribosomal subunit protein uS4c-1 of Cyanidium caldarium (Red alga).